Consider the following 2155-residue polypeptide: Conidial pigment polyketide synthase PfmaE (2155 aa).

The N-terminal acylcarrier protein transacylase domain (SAT) stretch occupies residues 8 to 245; it reads LLFGDQSLDT…TAIPVYGPYH (238 aa). In terms of domain architecture, Ketosynthase family 3 (KS3) spans 381–813; that stretch reads KCKLAIVGMA…GGNTGLLLED (433 aa). Catalysis depends on for beta-ketoacyl synthase activity residues C553, H688, and H731. Residues 910-1231 form a malonyl-CoA:ACP transacylase (MAT) domain region; it reads AFMFTGQGSH…LCTLHSAGLN (322 aa). S1001 (for acyl/malonyl transferase activity) is an active-site residue. The interval 1293 to 1608 is product template (PT) domain; that stretch reads TTTVQKVVRE…PRKVLNVVLP (316 aa). The tract at residues 1297-1428 is N-terminal hotdog fold; the sequence is QKVVREEVKG…CKVFFGDNEE (132 aa). Residues 1297–1604 form the PKS/mFAS DH domain; it reads QKVVREEVKG…FQAIPRKVLN (308 aa). The Proton acceptor; for dehydratase activity role is filled by H1329. The tract at residues 1455–1604 is C-terminal hotdog fold; that stretch reads DASKIGRGLA…FQAIPRKVLN (150 aa). D1516 serves as the catalytic Proton donor; for dehydratase activity. Carrier domains follow at residues 1653–1730 and 1779–1856; these read LTKN…AQFE and GNVS…GIED. S1690 carries the post-translational modification O-(pantetheine 4'-phosphoryl)serine. Residues 1738 to 1782 form a disordered region; it reads EENAHSSASSDSADMETESNFTTPSDDSEKDEVKGDAPAADGNVS. The residue at position 1816 (S1816) is an O-(pantetheine 4'-phosphoryl)serine. The disordered stretch occupies residues 1855-1892; that stretch reads EDKPKRAAPKSAKQEPAKPEPKVQGEAKAHTNPVDNYP. The segment covering 1866 to 1883 has biased composition (basic and acidic residues); it reads AKQEPAKPEPKVQGEAKA. The interval 1911-2041 is thioesterase (TE) domain; sequence QLFMIPDGSG…LGEGDDAEAK (131 aa).

Its pathway is pigment biosynthesis; melanin biosynthesis. Functionally, non-reducing polyketide synthase; part of the gene cluster that mediates the biosynthesis of dihydroxynaphthalene (DHN)-melanin, a bluish-green pigment forming a dark layer in the conidial wall that protects the conidia from UV radiations. The first step of the pathway is the production of the pentaketide 1,3,6,8-tetrahydroxynaphthalene (1,3,6,8-THN or T4HN) by the polyketide synthase PfmaE though condensation of acetyl-CoA with malonyl-CoA. T4HN is not stable and easily oxidizes into the stable form flaviolin. T4HN is also substrate of the hydroxynaphthalene reductase PfmaG to yield scytalone. The scytalone dehydratase PfmaJ then reduces scytalone to 1,3,8-THN. 1,3,8-THN is then substrate of the hydroxynaphthalene reductase PfmaI to yield vermelone. Vermelone is further converted by the multicopper oxidase PfmaD to 1,8-DHN. Finally the laccase PFICI_06862 transforms 1,8-DHN to DHN-melanin. The roles of the 5-oxoprolinase PfmaA and the proline iminopeptidase PfmaB within the cluster have not been elucidated yet. This chain is Conidial pigment polyketide synthase PfmaE, found in Pestalotiopsis fici (strain W106-1 / CGMCC3.15140).